We begin with the raw amino-acid sequence, 260 residues long: Small ribosomal subunit protein cS22 (260 aa).

The N-terminal 62 residues, 1-62 (MATISSILPC…TNPPLLKVRA (62 aa)), are a transit peptide targeting the chloroplast. The span at 63–78 (VVTEETSSSSTASSSS) shows a compositional bias: low complexity. A disordered region spans residues 63 to 83 (VVTEETSSSSTASSSSDGEGA). RRM domains follow at residues 84–162 (RRLY…ITEK) and 184–260 (YKVY…VNKA).

Component of the chloroplast small ribosomal subunit (SSU). Mature 70S chloroplast ribosomes of higher plants consist of a small (30S) and a large (50S) subunit. The 30S small subunit contains 1 molecule of ribosomal RNA (16S rRNA) and 24 different proteins. The 50S large subunit contains 3 rRNA molecules (23S, 5S and 4.5S rRNA) and 33 different proteins.

It localises to the plastid. The protein localises to the chloroplast. In terms of biological role, component of the chloroplast ribosome (chloro-ribosome), a dedicated translation machinery responsible for the synthesis of chloroplast genome-encoded proteins, including proteins of the transcription and translation machinery and components of the photosynthetic apparatus. cS22 may have a role in the recruitment of stored chloroplast mRNAs for active protein synthesis. The polypeptide is Small ribosomal subunit protein cS22 (PSRP2) (Spinacia oleracea (Spinach)).